The following is a 285-amino-acid chain: Ribosomal RNA small subunit methyltransferase A (285 aa).

6 residues coordinate S-adenosyl-L-methionine: N11, L13, G37, E57, D85, and N105.

Belongs to the class I-like SAM-binding methyltransferase superfamily. rRNA adenine N(6)-methyltransferase family. RsmA subfamily.

The protein localises to the cytoplasm. It carries out the reaction adenosine(1518)/adenosine(1519) in 16S rRNA + 4 S-adenosyl-L-methionine = N(6)-dimethyladenosine(1518)/N(6)-dimethyladenosine(1519) in 16S rRNA + 4 S-adenosyl-L-homocysteine + 4 H(+). Its function is as follows. Specifically dimethylates two adjacent adenosines (A1518 and A1519) in the loop of a conserved hairpin near the 3'-end of 16S rRNA in the 30S particle. May play a critical role in biogenesis of 30S subunits. In Campylobacter curvus (strain 525.92), this protein is Ribosomal RNA small subunit methyltransferase A.